The sequence spans 342 residues: MLKEPPKNSREKTKNLLLTLQDKICSGLENVDGKGKFTEESWLRDEGGGGRSRVLKNGSIFEQAGVNFSEVQGKELPQSIISQRPEAKGHEWFATGTSMVLHPKNPYIPTVHLNYRYFEAGPVWWFGGGADLTPFYPYLSDVRNFHNEHKKACEKVDQDLHKVFKPWCDEYFFLKHRNESRGIGGIFYDYQDGSGNIYRGNNKNGEASKASQNVGRSNLNWDNLFSLAENCGQAFLPSYLPIIEKRASQKYSPKEREFQLYRRGRYVEFNLVWDRGTIFGLQTNGRTESILMSLPPLARWEYGYKAKNGSREEFLTSIFTKPQDWFNDKELEKFCMENNIFD.

Ser98 lines the substrate pocket. A divalent metal cation is bound by residues His102 and His112. His112 acts as the Proton donor in catalysis. Position 114 to 116 (114 to 116 (NYR)) interacts with substrate. A divalent metal cation-binding residues include His146 and His176. The tract at residues 266 to 301 (YVEFNLVWDRGTIFGLQTNGRTESILMSLPPLARWE) is important for dimerization.

Belongs to the aerobic coproporphyrinogen-III oxidase family. As to quaternary structure, homodimer. A divalent metal cation is required as a cofactor.

It localises to the cytoplasm. The enzyme catalyses coproporphyrinogen III + O2 + 2 H(+) = protoporphyrinogen IX + 2 CO2 + 2 H2O. It participates in porphyrin-containing compound metabolism; protoporphyrin-IX biosynthesis; protoporphyrinogen-IX from coproporphyrinogen-III (O2 route): step 1/1. Involved in the heme and chlorophyll biosynthesis. Catalyzes the aerobic oxidative decarboxylation of propionate groups of rings A and B of coproporphyrinogen-III to yield the vinyl groups in protoporphyrinogen-IX. This Prochlorococcus marinus (strain AS9601) protein is Oxygen-dependent coproporphyrinogen-III oxidase.